We begin with the raw amino-acid sequence, 775 residues long: Armadillo-like helical domain-containing protein 4 (775 aa).

Positions 1-47 (MLQDSITGIVNSFNLFFPSTMSRPTLMPTCVAFCSILFLTLATGCQA) are cleaved as a signal peptide. The Extracellular segment spans residues 48–715 (FPKVERRETA…KDKAGYMSGM (668 aa)). Asn76 is a glycosylation site (N-linked (GlcNAc...) asparagine). Disordered regions lie at residues 120–148 (AGLLHPTSPGVYSSSEPVVSASEQEPGPS), 247–273 (VPGVDSTGDMEPDRERPSEMAADDGQS), and 324–366 (KFES…PSST). Residues 129–142 (GVYSSSEPVVSASE) show a composition bias toward polar residues. The span at 324-335 (KFESISRGRPPE) shows a compositional bias: basic and acidic residues. N-linked (GlcNAc...) asparagine glycosylation occurs at Asn476. The interval 559 to 669 (IPVLGSPMAP…PGITSQEPDI (111 aa)) is disordered. Residues 577-599 (TISSALPSEGRTSPSISRPNTAA) are compositionally biased toward polar residues. Residues 606–640 (LESEEVEDDEDEEDEEDEEEEEEDEEDEEDEEDKE) are compositionally biased toward acidic residues. The chain crosses the membrane as a helical span at residues 716-736 (LVPVGVGIAGALFILGALYSI). The Cytoplasmic segment spans residues 737–775 (KVMNRRRRNGFKRHKRKQREFNSMQDRVMLLADSSEDEF). Phosphoserine occurs at positions 770 and 771.

Interacts with IL6ST; this interaction prevents IL6ST protein homodimerization and bridges ARMH4 with IL6R and STAT3 and therefore inhibits phosphorylation of STAT3 at 'Tyr-705'. Interacts (via cytoplasmic tail) with RICTOR; this interaction bridges ARMH4 to the mTORC2 complex and inhibits the mTORC2 kinase activity. Expressed in bone-marroew cells.

It is found in the membrane. May modulate immune response and may play a role in inflammation. Down-modulates STAT3 signaling throught direct interaction with IL6ST, resulting in the inhibition of phosphorylation of STAT3 at 'Tyr-705'. May negatively regulates AKT signaling by modulating the activity of mTORC2 complex through RICTOR interaction. The chain is Armadillo-like helical domain-containing protein 4 from Mus musculus (Mouse).